Reading from the N-terminus, the 309-residue chain is Acetylglutamate kinase (309 aa).

Residues 82–83 (GG), Arg-104, and Asn-206 each bind substrate.

Belongs to the acetylglutamate kinase family. ArgB subfamily.

It is found in the cytoplasm. The enzyme catalyses N-acetyl-L-glutamate + ATP = N-acetyl-L-glutamyl 5-phosphate + ADP. It functions in the pathway amino-acid biosynthesis; L-arginine biosynthesis; N(2)-acetyl-L-ornithine from L-glutamate: step 2/4. Catalyzes the ATP-dependent phosphorylation of N-acetyl-L-glutamate. In Cupriavidus pinatubonensis (strain JMP 134 / LMG 1197) (Cupriavidus necator (strain JMP 134)), this protein is Acetylglutamate kinase.